A 424-amino-acid chain; its full sequence is G1/S-specific cyclin-E (424 aa).

The disordered stretch occupies residues 1–25 (MSRRSGRLQSRQDNQPLTECISDEN). Residues 7 to 17 (RLQSRQDNQPL) are compositionally biased toward polar residues. Threonine 411 carries the phosphothreonine modification.

This sequence belongs to the cyclin family. Cyclin E subfamily. In terms of assembly, interacts with a member of the CDK2/CDK protein kinases to form a serine/threonine kinase holoenzyme complex. The cyclin subunit imparts substrate specificity to the complex.

It is found in the nucleus. Functionally, essential for the control of the cell cycle at the G1/S (start) transition. The protein is G1/S-specific cyclin-E (CYCE) of Hemicentrotus pulcherrimus (Sea urchin).